A 109-amino-acid polypeptide reads, in one-letter code: Sperm-specific class P protein 10 (109 aa).

Positions 2 to 109 constitute an MSP domain; it reads SLTADPPACT…TVTIPMSATA (108 aa).

Expressed at higher level in testis.

The protein is Sperm-specific class P protein 10 (ssp-10) of Caenorhabditis elegans.